Here is a 378-residue protein sequence, read N- to C-terminus: Anhydro-N-acetylmuramic acid kinase (378 aa).

Position 9-16 (9-16 (GTSADGID)) interacts with ATP.

Belongs to the anhydro-N-acetylmuramic acid kinase family.

The enzyme catalyses 1,6-anhydro-N-acetyl-beta-muramate + ATP + H2O = N-acetyl-D-muramate 6-phosphate + ADP + H(+). It functions in the pathway amino-sugar metabolism; 1,6-anhydro-N-acetylmuramate degradation. The protein operates within cell wall biogenesis; peptidoglycan recycling. Functionally, catalyzes the specific phosphorylation of 1,6-anhydro-N-acetylmuramic acid (anhMurNAc) with the simultaneous cleavage of the 1,6-anhydro ring, generating MurNAc-6-P. Is required for the utilization of anhMurNAc either imported from the medium or derived from its own cell wall murein, and thus plays a role in cell wall recycling. The sequence is that of Anhydro-N-acetylmuramic acid kinase from Synechococcus sp. (strain ATCC 27144 / PCC 6301 / SAUG 1402/1) (Anacystis nidulans).